Consider the following 482-residue polypeptide: Kynurenine 3-monooxygenase (482 aa).

It belongs to the aromatic-ring hydroxylase family. KMO subfamily. FAD is required as a cofactor.

Its subcellular location is the mitochondrion outer membrane. It catalyses the reaction L-kynurenine + NADPH + O2 + H(+) = 3-hydroxy-L-kynurenine + NADP(+) + H2O. It participates in cofactor biosynthesis; NAD(+) biosynthesis; quinolinate from L-kynurenine: step 1/3. Catalyzes the hydroxylation of L-kynurenine (L-Kyn) to form 3-hydroxy-L-kynurenine (L-3OHKyn). Required for synthesis of quinolinic acid. This Phaeosphaeria nodorum (strain SN15 / ATCC MYA-4574 / FGSC 10173) (Glume blotch fungus) protein is Kynurenine 3-monooxygenase.